A 219-amino-acid polypeptide reads, in one-letter code: ATP synthase subunit a (219 aa).

6 helical membrane passes run 16–36 (LSNWLSMLIPLLFMVMSFWLI), 57–79 (LLMGPASFGANILVIALFLFILF), 96–116 (LAVTLSLAVPLWISFILYTWI), 122–142 (ALAHLVPLGTPAPLMPFMVLM), 158–178 (LAANMIAGHLLLTLLGAQGTL), and 184–204 (TSIVVFSQIILLMLEFSVAII).

It belongs to the ATPase A chain family. In terms of assembly, F-type ATPases have 2 components, CF(1) - the catalytic core - and CF(0) - the membrane proton channel. CF(1) has five subunits: alpha(3), beta(3), gamma(1), delta(1), epsilon(1). CF(0) has three main subunits: a, b and c.

The protein localises to the mitochondrion inner membrane. Its function is as follows. Mitochondrial membrane ATP synthase (F(1)F(0) ATP synthase or Complex V) produces ATP from ADP in the presence of a proton gradient across the membrane which is generated by electron transport complexes of the respiratory chain. F-type ATPases consist of two structural domains, F(1) - containing the extramembraneous catalytic core and F(0) - containing the membrane proton channel, linked together by a central stalk and a peripheral stalk. During catalysis, ATP synthesis in the catalytic domain of F(1) is coupled via a rotary mechanism of the central stalk subunits to proton translocation. Key component of the proton channel; it may play a direct role in the translocation of protons across the membrane. The chain is ATP synthase subunit a (ATP6) from Artemia franciscana (Brine shrimp).